Reading from the N-terminus, the 169-residue chain is S-ribosylhomocysteine lyase (169 aa).

Residues His54, His58, and Cys128 each contribute to the Fe cation site.

Belongs to the LuxS family. As to quaternary structure, homodimer. Fe cation serves as cofactor.

The enzyme catalyses S-(5-deoxy-D-ribos-5-yl)-L-homocysteine = (S)-4,5-dihydroxypentane-2,3-dione + L-homocysteine. Its function is as follows. Involved in the synthesis of autoinducer 2 (AI-2) which is secreted by bacteria and is used to communicate both the cell density and the metabolic potential of the environment. The regulation of gene expression in response to changes in cell density is called quorum sensing. Catalyzes the transformation of S-ribosylhomocysteine (RHC) to homocysteine (HC) and 4,5-dihydroxy-2,3-pentadione (DPD). In Shewanella sp. (strain MR-7), this protein is S-ribosylhomocysteine lyase.